Reading from the N-terminus, the 214-residue chain is Small ribosomal subunit protein uS5 (214 aa).

The 64-residue stretch at 54–117 (MKYEVIDIGM…RDAKMHVIPV (64 aa)) folds into the S5 DRBM domain.

The protein belongs to the universal ribosomal protein uS5 family. As to quaternary structure, part of the 30S ribosomal subunit. Contacts protein S4.

In terms of biological role, with S4 and S12 plays an important role in translational accuracy. This chain is Small ribosomal subunit protein uS5, found in Metallosphaera sedula (strain ATCC 51363 / DSM 5348 / JCM 9185 / NBRC 15509 / TH2).